The sequence spans 1144 residues: Nitric oxide synthase, inducible (1144 aa).

The DINNN-motif; mediates interaction with SPSB1, SPSB2 and SPSB4 motif lies at 23 to 27; sequence DINNN. Positions 37-59 are disordered; sequence SPTIQDDPKSHQNGSPQLLTGTA. The segment covering 47 to 59 has biased composition (polar residues); it reads HQNGSPQLLTGTA. Positions 104 and 109 each coordinate Zn(2+). (6R)-L-erythro-5,6,7,8-tetrahydrobiopterin is bound at residue S112. C194 serves as a coordination point for heme b. Residues Q257, W366, Y367, and E371 each coordinate L-arginine. 4 residues coordinate (6R)-L-erythro-5,6,7,8-tetrahydrobiopterin: R375, I456, W457, and F470. Y485 contacts heme b. Residues 509 to 529 form a calmodulin-binding region; the sequence is FRVLVKVVFFASMLMRKVMAS. The 139-residue stretch at 533–671 folds into the Flavodoxin-like domain; sequence ATVLFATETG…AFRSWAVQTF (139 aa). Residues T539, E540, T541, K543, and S544 each coordinate FMN. Phosphotyrosine is present on Y569. FMN contacts are provided by S585, T586, S622, C629, E655, and Q659. The FAD-binding FR-type domain occupies 724–964; sequence KNVFTMRLKS…VRSVSGFQLP (241 aa). R744 provides a ligand contact to NADP(+). Residues H766, R900, Y902, S903, T918, and A920 each contribute to the FAD site. T923 contributes to the NADP(+) binding site. The FAD site is built by Y924, V937, C938, and S939. Residues T978, R1011, S1040, R1041, K1047, Y1049, Q1051, and D1084 each contribute to the NADP(+) site.

Belongs to the NOS family. In terms of assembly, homodimer. Interacts with NHERF1. Interacts with GAPDH. Interacts with S100A8 and S100A9 to form the iNOS-S100A8/9 transnitrosylase complex. Interacts with SPSB1, SPSB2 and SPSB4. Interacts with ELOC and CUL5 in the presence of SPSB1 or SPSB2 or SPSB4. Forms a complex with ASL, ASS1 and HSP90AA1; the complex regulates cell-autonomous L-arginine synthesis and citrulline recycling while channeling extracellular L-arginine to nitric oxide synthesis pathway. The cofactor is heme b. FAD is required as a cofactor. FMN serves as cofactor. Requires (6R)-L-erythro-5,6,7,8-tetrahydrobiopterin as cofactor. Polyubiquitinated; mediated by SPSB1, SPSB2 and SPSB4, leading to proteasomal degradation. As to expression, macrophages.

It is found in the cytoplasm. The protein resides in the cytosol. It catalyses the reaction 2 L-arginine + 3 NADPH + 4 O2 + H(+) = 2 L-citrulline + 2 nitric oxide + 3 NADP(+) + 4 H2O. Its activity is regulated as follows. Not stimulated by calcium/calmodulin. Aspirin inhibits expression and function of this enzyme and effects may be exerted at the level of translational/post-translational modification and directly on the catalytic activity. Its function is as follows. Produces nitric oxide (NO) which is a messenger molecule with diverse functions throughout the body. In macrophages, NO mediates tumoricidal and bactericidal actions. Also has nitrosylase activity and mediates cysteine S-nitrosylation of cytoplasmic target proteins such PTGS2/COX2. As component of the iNOS-S100A8/9 transnitrosylase complex involved in the selective inflammatory stimulus-dependent S-nitrosylation of GAPDH implicated in regulation of the GAIT complex activity and probably multiple targets including ANXA5, EZR, MSN and VIM. Involved in inflammation, enhances the synthesis of pro-inflammatory mediators such as IL6 and IL8. This is Nitric oxide synthase, inducible (Nos2) from Mus musculus (Mouse).